Here is a 416-residue protein sequence, read N- to C-terminus: Serine protease hepsin (416 aa).

Residues 1-18 (MAKEGGRTAPCCSRPKVA) lie on the Cytoplasmic side of the membrane. Residues 19–39 (ALTVGTLLFLTGIGAASWAIV) form a helical; Signal-anchor for type II membrane protein membrane-spanning segment. Topologically, residues 40–416 (TILLRSDQEP…SEATGMVTQP (377 aa)) are extracellular. An SRCR domain is found at 53–150 (VQLSPGDSRL…RGRFLTATCQ (98 aa)). Cystine bridges form between Cys76-Cys139, Cys89-Cys149, Cys118-Cys137, Cys152-Cys276, Cys187-Cys203, Cys290-Cys358, Cys321-Cys337, and Cys348-Cys380. A glycan (N-linked (GlcNAc...) asparagine) is linked at Asn111. A Peptidase S1 domain is found at 162–404 (IVGGQDSSLG…FREWIFQAIK (243 aa)). Active-site charge relay system residues include His202 and Asp256. The active-site Charge relay system is Ser352.

Belongs to the peptidase S1 family. As to expression, widely expressed. Present in brain, heart, kidney, liver, stomach, muscle, lung, testis, skin and eye. Not expressed in ovary and thynus. In inner ear tissues, expressed in stria vascularis, modiolus, organ of Corti and spiral ganglion.

The protein localises to the cell membrane. The protein resides in the apical cell membrane. The enzyme catalyses Cleavage after basic amino-acid residues, with Arg strongly preferred to Lys.. Functionally, serine protease that cleaves extracellular substrates, and contributes to the proteolytic processing of growth factors, such as HGF and MST1/HGFL. Plays a role in cell growth and maintenance of cell morphology. Plays a role in the proteolytic processing of ACE2. Mediates the proteolytic cleavage of urinary UMOD that is required for UMOD polymerization. This chain is Serine protease hepsin (Hpn), found in Rattus norvegicus (Rat).